The primary structure comprises 258 residues: 5'-nucleotidase SurE (258 aa).

Aspartate 8, aspartate 9, serine 40, and asparagine 98 together coordinate a divalent metal cation.

This sequence belongs to the SurE nucleotidase family. Requires a divalent metal cation as cofactor.

Its subcellular location is the cytoplasm. It carries out the reaction a ribonucleoside 5'-phosphate + H2O = a ribonucleoside + phosphate. Functionally, nucleotidase that shows phosphatase activity on nucleoside 5'-monophosphates. The protein is 5'-nucleotidase SurE of Synechococcus elongatus (strain ATCC 33912 / PCC 7942 / FACHB-805) (Anacystis nidulans R2).